The chain runs to 59 residues: Cuticle protein 16 isoform D (59 aa).

This is Cuticle protein 16 isoform D from Limulus polyphemus (Atlantic horseshoe crab).